The chain runs to 399 residues: Secreted RxLR effector protein 36 (399 aa).

A signal peptide spans 1–21 (MRGTIYVAIAILVAASSRSSA). Positions 50-71 (RILRESRGSNDKLAVGAGDEER) match the RxLR-dEER motif. Asn-75 carries an N-linked (GlcNAc...) asparagine glycan. Residues 126–145 (IDPTPSNLGGQALHAPPNPD) form a disordered region.

Belongs to the RxLR effector family.

The protein resides in the secreted. The protein localises to the host nucleus. In terms of biological role, secreted effector that completely suppresses the host cell death induced by cell death-inducing proteins. This chain is Secreted RxLR effector protein 36, found in Plasmopara viticola (Downy mildew of grapevine).